Here is a 217-residue protein sequence, read N- to C-terminus: Lectin ADEL (217 aa).

5 disulfide bridges follow: Cys5–Cys187, Cys42–Cys68, Cys61–Cys77, Cys114–Cys135, and Cys142–Cys206. Asn30 carries an N-linked (GlcNAc...) asparagine glycan. 2 N-linked (GlcNAc...) asparagine glycosylation sites follow: Asn102 and Asn126.

As to quaternary structure, homodimer; disulfide-linked. In terms of processing, contains disulfide bonds.

Its function is as follows. Binds in decreasing order of affinity: galacturonic acid, D-galactosamine, methyl-alpha-D-galactopyranoside and further galactose-containing carbohydrates. Has hemagglutinating activity against human and rabbit erythrocytes. The chain is Lectin ADEL from Aplysia dactylomela (Spotted sea hare).